The following is a 453-amino-acid chain: Carbamoyl phosphate synthase arginine-specific small chain (453 aa).

The N-terminal 28 residues, 1–28 (MFARVFKAMPARASALTSVNASIQARFM), are a transit peptide targeting the mitochondrion. One can recognise a Glutamine amidotransferase type-1 domain in the interval 219-406 (HVAVIDCGVK…IDSVKKYKAS (188 aa)). C295 functions as the Nucleophile in the catalytic mechanism. Catalysis depends on residues H379 and E381.

This sequence belongs to the CarA family. In terms of assembly, heterodimer composed of 2 chains; the small (or glutamine) chain promotes the hydrolysis of glutamine to ammonia, which is used by the large (or ammonia) chain to synthesize carbamoyl phosphate.

The protein localises to the mitochondrion matrix. The enzyme catalyses hydrogencarbonate + L-glutamine + 2 ATP + H2O = carbamoyl phosphate + L-glutamate + 2 ADP + phosphate + 2 H(+). It catalyses the reaction L-glutamine + H2O = L-glutamate + NH4(+). It participates in amino-acid biosynthesis; L-arginine biosynthesis; carbamoyl phosphate from bicarbonate: step 1/1. Functionally, small subunit of the arginine-specific carbamoyl phosphate synthase (CPSase). CPSase catalyzes the formation of carbamoyl phosphate from the ammonia moiety of glutamine, carbonate, and phosphate donated by ATP, the first step of the arginine biosynthetic pathway. The small subunit (glutamine amidotransferase) binds and cleaves glutamine to supply the large subunit with the substrate ammonia. The protein is Carbamoyl phosphate synthase arginine-specific small chain (cpa1) of Neosartorya fischeri (strain ATCC 1020 / DSM 3700 / CBS 544.65 / FGSC A1164 / JCM 1740 / NRRL 181 / WB 181) (Aspergillus fischerianus).